Consider the following 216-residue polypeptide: Protein-L-isoaspartate O-methyltransferase (216 aa).

Residue S66 is part of the active site.

This sequence belongs to the methyltransferase superfamily. L-isoaspartyl/D-aspartyl protein methyltransferase family.

It is found in the cytoplasm. It carries out the reaction [protein]-L-isoaspartate + S-adenosyl-L-methionine = [protein]-L-isoaspartate alpha-methyl ester + S-adenosyl-L-homocysteine. In terms of biological role, catalyzes the methyl esterification of L-isoaspartyl residues in peptides and proteins that result from spontaneous decomposition of normal L-aspartyl and L-asparaginyl residues. It plays a role in the repair and/or degradation of damaged proteins. The sequence is that of Protein-L-isoaspartate O-methyltransferase from Colwellia psychrerythraea (strain 34H / ATCC BAA-681) (Vibrio psychroerythus).